The primary structure comprises 462 residues: 23S rRNA (uracil(1939)-C(5))-methyltransferase RlmD (462 aa).

The TRAM domain maps to 6-76 (KSRKPQQPEY…KRLEEAEMVE (71 aa)). C90, C96, C99, and C178 together coordinate [4Fe-4S] cluster. 6 residues coordinate S-adenosyl-L-methionine: Q287, F316, N321, E340, D367, and D388. Residue C414 is the Nucleophile of the active site.

The protein belongs to the class I-like SAM-binding methyltransferase superfamily. RNA M5U methyltransferase family. RlmD subfamily.

It carries out the reaction uridine(1939) in 23S rRNA + S-adenosyl-L-methionine = 5-methyluridine(1939) in 23S rRNA + S-adenosyl-L-homocysteine + H(+). In terms of biological role, catalyzes the formation of 5-methyl-uridine at position 1939 (m5U1939) in 23S rRNA. This is 23S rRNA (uracil(1939)-C(5))-methyltransferase RlmD from Acinetobacter baumannii (strain AB0057).